Consider the following 91-residue polypeptide: Probable Fe(2+)-trafficking protein (91 aa).

It belongs to the Fe(2+)-trafficking protein family. As to quaternary structure, monomer.

Functionally, could be a mediator in iron transactions between iron acquisition and iron-requiring processes, such as synthesis and/or repair of Fe-S clusters in biosynthetic enzymes. The polypeptide is Probable Fe(2+)-trafficking protein (Cronobacter sakazakii (strain ATCC BAA-894) (Enterobacter sakazakii)).